Reading from the N-terminus, the 526-residue chain is Cytochrome P450 monooxygenase ucsK (526 aa).

A helical membrane pass occupies residues 7–27 (PVLAAATAVSFGFYLAGLFVY). The N-linked (GlcNAc...) asparagine glycan is linked to Asn-403. Residue Cys-467 participates in heme binding.

The protein belongs to the cytochrome P450 family. It depends on heme as a cofactor.

The protein resides in the membrane. It participates in mycotoxin biosynthesis. Its function is as follows. Cytochrome P450 monooxygenase; part of the gene cluster that mediates the biosynthesis of UCS1025A, a member of the pyrrolizidinone family that acts as a strong telomerase inhibitor and displays potent antibacterial and antitumor properties. These compounds share a hemiaminal-containing pyrrolizidinone core fused with a gamma-lactone, giving a furopyrrolizidine that is connected to a decalin fragment. The polyketide synthase module (PKS) of the PKS-NRPS ucsA is responsible for the synthesis of the polyketide backbone via the condensation of an acetyl-CoA starter unit with 6 malonyl-CoA units. The downstream nonribosomal peptide synthetase (NRPS) module then amidates the carboxyl end of the polyketide with a 2S,3S-methylproline derived from L-isoleucine by the 2-oxoglutarate-dependent dioxygenase ucsF which converts L-isoleucine to (4S,5S)-4-methylpyrroline-5-carboxylate that is further converted to 2S,3S-methylproline by the pyrroline-5-carboxylate reductase ucsG. Reductive release of the completed aminoacyl polyketide from the assembly line can form the 3-pyrrolin-2-one structure via an intramolecular Knoevenagel reaction. Because ucsA lacks a designated enoylreductase (ER) domain, the required activity is provided the enoyl reductase ucsL. This keto acyclic precursor is the substrate of the Diels-Alderase ucsH, that catalyzes the Diels-Alder cycloaddition. Oxidation of the 3S-methyl group to a carboxylate by the cytochrome P450 monooxygenase ucsK allows an oxa-Michael cyclization that might involve the reductase/dehydrogenase ucsI and which furnishes the furopyrrolizidine. The oxidase ucsJ likely plays a critical role in stereoselective reduction of the C5-C6 double bond to afford the required R-configured carboxylate group. Further enolization and oxidation at C5 by an unidentified enzyme affords the last intermediate that can undergo oxa-Michael cyclization to yield UCS1025A. The sequence is that of Cytochrome P450 monooxygenase ucsK from Acremonium sp.